The sequence spans 329 residues: Malate dehydrogenase (329 aa).

Residue 12 to 18 participates in NAD(+) binding; that stretch reads GAAGQIG. Substrate is bound by residues Arg-95 and Arg-101. NAD(+) contacts are provided by residues Asn-108, Gln-115, and 132–134; that span reads VGN. Substrate is bound by residues Asn-134 and Arg-165. His-190 functions as the Proton acceptor in the catalytic mechanism.

Belongs to the LDH/MDH superfamily. MDH type 2 family.

The enzyme catalyses (S)-malate + NAD(+) = oxaloacetate + NADH + H(+). Its function is as follows. Catalyzes the reversible oxidation of malate to oxaloacetate. The protein is Malate dehydrogenase of Janthinobacterium sp. (strain Marseille) (Minibacterium massiliensis).